Consider the following 355-residue polypeptide: (3aS,4S,5R,7aS)-5-hydroxy-7a-methyl-1-oxo-octahydro-1H-indene-4-carboxyl-CoA dehydrogenase (355 aa).

Residues 21-23 (GMG), 173-175 (AGG), and 196-197 (GT) each bind FMN.

This sequence belongs to the nitronate monooxygenase family.

It carries out the reaction (3aS,4S,5R,7aS)-5-hydroxy-7a-methyl-1-oxo-octahydro-1H-indene-4-carboxyl-CoA + NAD(+) = (5R,7aS)-5-hydroxy-7a-methyl-1-oxo-2,3,5,6,7,7a-hexahydro-1H-indene-carboxyl-CoA + NADH + H(+). It participates in steroid metabolism; cholesterol degradation. With respect to regulation, requires the presence of IpdF. Functionally, involved in the final steps of cholesterol and steroid degradation. Probably catalyzes the introduction of a double bound into the C ring of 5OH-HIC-CoA, leading to the formation of (5R,7aS)-5-hydroxy-7a-methyl-1-oxo-3,5,6,7-tetrahydro-2H-indene-4-carboxyl-CoA. The sequence is that of (3aS,4S,5R,7aS)-5-hydroxy-7a-methyl-1-oxo-octahydro-1H-indene-4-carboxyl-CoA dehydrogenase from Mycobacterium tuberculosis (strain ATCC 25618 / H37Rv).